The following is a 45-amino-acid chain: Mu-conotoxin-like Cal 12.1.2e (45 aa).

Disulfide bonds link Cys3–Cys16, Cys11–Cys28, Cys18–Cys33, and Cys27–Cys39. At Trp17 the chain carries 6'-bromotryptophan. Pro23 is subject to 4-hydroxyproline. Trp38 carries the post-translational modification 6'-bromotryptophan. 4-hydroxyproline is present on Pro40.

In terms of tissue distribution, expressed by the venom duct.

It is found in the secreted. In terms of biological role, mu-conotoxins block voltage-gated sodium channels. This toxin reversibly blocks voltage-gated sodium channel in cephalopods, with no alteration in the voltage dependence of sodium conductance or on the kinetics of inactivation. In Californiconus californicus (California cone), this protein is Mu-conotoxin-like Cal 12.1.2e.